The following is a 336-amino-acid chain: Opsin-1, short-wave-sensitive 1 (336 aa).

Topologically, residues 1–29 are extracellular; it reads MDAWAVQFGNASKVSPFEGEQYHIAPKWA. A glycan (N-linked (GlcNAc...) asparagine) is linked at N10. A helical membrane pass occupies residues 30–54; sequence FYLQAAFMGFVFIVGTPMNGIVLFV. Over 55 to 66 the chain is Cytoplasmic; it reads TMKYKKLRQPLN. The chain crosses the membrane as a helical span at residues 67-91; sequence YILVNISLAGFIFDTFSVSQVFVCA. Residues 92–106 are Extracellular-facing; it reads ARGYYFLGYTLCAME. C103 and C180 are disulfide-bonded. A helical transmembrane segment spans residues 107–126; that stretch reads AAMGSIAGLVTGWSLAVLAF. Residues 127–145 lie on the Cytoplasmic side of the membrane; that stretch reads ERYVVICKPFGSFKFGQGQ. Residues 146-169 traverse the membrane as a helical segment; sequence AVGAVVFTWIIGTACATPPFFGWS. At 170–195 the chain is on the extracellular side; the sequence is RYIPEGLGTACGPDWYTKSEEYNSES. The chain crosses the membrane as a helical span at residues 196–223; sequence YTYFLLITCFMMPMTIIIFSYSQLLGAL. The Cytoplasmic portion of the chain corresponds to 224–245; that stretch reads RAVAAQQAESESTQKAEREVSR. A helical transmembrane segment spans residues 246–269; it reads MVVVMVGSFVLCYAPYAVTAMYFA. Topologically, residues 270–277 are extracellular; it reads NSDEPNKD. Residues 278-302 form a helical membrane-spanning segment; it reads YRLVAIPAFFSKSSCVYNPLIYAFM. N6-(retinylidene)lysine is present on K289. At 303 to 336 the chain is on the cytoplasmic side; that stretch reads NKQFNACIMETVFGKKIDESSEVSSKTETSSVSA.

Belongs to the G-protein coupled receptor 1 family. Opsin subfamily. Post-translationally, phosphorylated on some or all of the serine and threonine residues present in the C-terminal region. As to expression, retinal short single cones, outer and inner segments.

The protein localises to the membrane. Functionally, visual pigments are the light-absorbing molecules that mediate vision. They consist of an apoprotein, opsin, covalently linked to cis-retinal. This chain is Opsin-1, short-wave-sensitive 1 (opn1sw1), found in Danio rerio (Zebrafish).